A 378-amino-acid chain; its full sequence is Erythronate-4-phosphate dehydrogenase (378 aa).

Substrate contacts are provided by serine 45 and threonine 66. NAD(+) is bound by residues aspartate 146 and threonine 175. Arginine 208 is an active-site residue. Position 232 (aspartate 232) interacts with NAD(+). Residue glutamate 237 is part of the active site. Histidine 254 functions as the Proton donor in the catalytic mechanism. Glycine 257 serves as a coordination point for NAD(+). Residue tyrosine 258 coordinates substrate.

The protein belongs to the D-isomer specific 2-hydroxyacid dehydrogenase family. PdxB subfamily. Homodimer.

It is found in the cytoplasm. It catalyses the reaction 4-phospho-D-erythronate + NAD(+) = (R)-3-hydroxy-2-oxo-4-phosphooxybutanoate + NADH + H(+). The protein operates within cofactor biosynthesis; pyridoxine 5'-phosphate biosynthesis; pyridoxine 5'-phosphate from D-erythrose 4-phosphate: step 2/5. Its function is as follows. Catalyzes the oxidation of erythronate-4-phosphate to 3-hydroxy-2-oxo-4-phosphonooxybutanoate. This is Erythronate-4-phosphate dehydrogenase from Salmonella arizonae (strain ATCC BAA-731 / CDC346-86 / RSK2980).